The sequence spans 140 residues: uncharacterized protein (140 aa).

It belongs to the MG067/MG068/MG395 family.

This is an uncharacterized protein from Mycoplasma pneumoniae (strain ATCC 29342 / M129 / Subtype 1) (Mycoplasmoides pneumoniae).